Reading from the N-terminus, the 293-residue chain is Bifunctional protein FolD (293 aa).

Residues 162–164 (GQS) and Ile227 contribute to the NADP(+) site.

The protein belongs to the tetrahydrofolate dehydrogenase/cyclohydrolase family. Homodimer.

The enzyme catalyses (6R)-5,10-methylene-5,6,7,8-tetrahydrofolate + NADP(+) = (6R)-5,10-methenyltetrahydrofolate + NADPH. The catalysed reaction is (6R)-5,10-methenyltetrahydrofolate + H2O = (6R)-10-formyltetrahydrofolate + H(+). Its pathway is one-carbon metabolism; tetrahydrofolate interconversion. Catalyzes the oxidation of 5,10-methylenetetrahydrofolate to 5,10-methenyltetrahydrofolate and then the hydrolysis of 5,10-methenyltetrahydrofolate to 10-formyltetrahydrofolate. In Metamycoplasma arthritidis (strain 158L3-1) (Mycoplasma arthritidis), this protein is Bifunctional protein FolD.